A 332-amino-acid polypeptide reads, in one-letter code: 4-hydroxy-3-methylbut-2-enyl diphosphate reductase (332 aa).

Residue Cys-13 participates in [4Fe-4S] cluster binding. Residues His-41 and His-75 each contribute to the (2E)-4-hydroxy-3-methylbut-2-enyl diphosphate site. His-41 and His-75 together coordinate dimethylallyl diphosphate. Isopentenyl diphosphate is bound by residues His-41 and His-75. Cys-97 contacts [4Fe-4S] cluster. His-125 contributes to the (2E)-4-hydroxy-3-methylbut-2-enyl diphosphate binding site. Position 125 (His-125) interacts with dimethylallyl diphosphate. His-125 lines the isopentenyl diphosphate pocket. Residue Glu-127 is the Proton donor of the active site. Thr-168 serves as a coordination point for (2E)-4-hydroxy-3-methylbut-2-enyl diphosphate. Cys-229 serves as a coordination point for [4Fe-4S] cluster. (2E)-4-hydroxy-3-methylbut-2-enyl diphosphate-binding residues include Ser-257, Ser-258, Asn-259, and Ser-306. 4 residues coordinate dimethylallyl diphosphate: Ser-257, Ser-258, Asn-259, and Ser-306. Residues Ser-257, Ser-258, Asn-259, and Ser-306 each contribute to the isopentenyl diphosphate site.

It belongs to the IspH family. [4Fe-4S] cluster serves as cofactor.

The catalysed reaction is isopentenyl diphosphate + 2 oxidized [2Fe-2S]-[ferredoxin] + H2O = (2E)-4-hydroxy-3-methylbut-2-enyl diphosphate + 2 reduced [2Fe-2S]-[ferredoxin] + 2 H(+). It carries out the reaction dimethylallyl diphosphate + 2 oxidized [2Fe-2S]-[ferredoxin] + H2O = (2E)-4-hydroxy-3-methylbut-2-enyl diphosphate + 2 reduced [2Fe-2S]-[ferredoxin] + 2 H(+). The protein operates within isoprenoid biosynthesis; dimethylallyl diphosphate biosynthesis; dimethylallyl diphosphate from (2E)-4-hydroxy-3-methylbutenyl diphosphate: step 1/1. It participates in isoprenoid biosynthesis; isopentenyl diphosphate biosynthesis via DXP pathway; isopentenyl diphosphate from 1-deoxy-D-xylulose 5-phosphate: step 6/6. Its function is as follows. Catalyzes the conversion of 1-hydroxy-2-methyl-2-(E)-butenyl 4-diphosphate (HMBPP) into a mixture of isopentenyl diphosphate (IPP) and dimethylallyl diphosphate (DMAPP). Acts in the terminal step of the DOXP/MEP pathway for isoprenoid precursor biosynthesis. This Chlorobaculum parvum (strain DSM 263 / NCIMB 8327) (Chlorobium vibrioforme subsp. thiosulfatophilum) protein is 4-hydroxy-3-methylbut-2-enyl diphosphate reductase.